A 212-amino-acid polypeptide reads, in one-letter code: Peptide methionine sulfoxide reductase MsrA (212 aa).

The active site involves Cys52.

The protein belongs to the MsrA Met sulfoxide reductase family.

The enzyme catalyses L-methionyl-[protein] + [thioredoxin]-disulfide + H2O = L-methionyl-(S)-S-oxide-[protein] + [thioredoxin]-dithiol. It carries out the reaction [thioredoxin]-disulfide + L-methionine + H2O = L-methionine (S)-S-oxide + [thioredoxin]-dithiol. Has an important function as a repair enzyme for proteins that have been inactivated by oxidation. Catalyzes the reversible oxidation-reduction of methionine sulfoxide in proteins to methionine. This Escherichia coli O127:H6 (strain E2348/69 / EPEC) protein is Peptide methionine sulfoxide reductase MsrA.